Reading from the N-terminus, the 343-residue chain is Fe-S cluster assembly protein DRE2 (343 aa).

The tract at residues M1–I188 is N-terminal SAM-like domain. Residues K189–D240 are linker. 2 stretches are compositionally biased toward acidic residues: residues L195–D206 and D218–I228. The segment at L195–I228 is disordered. Residues C247, C258, C261, and C263 each coordinate [2Fe-2S] cluster. Positions C247 to C263 are fe-S binding site A. Residues C306, C309, C317, and C320 each coordinate [4Fe-4S] cluster. 2 short sequence motifs (cx2C motif) span residues C306–C309 and C317–C320. A fe-S binding site B region spans residues C306–C320.

It belongs to the anamorsin family. Monomer. Interacts with TAH18. Interacts with MIA40. It depends on [2Fe-2S] cluster as a cofactor. [4Fe-4S] cluster serves as cofactor.

Its subcellular location is the cytoplasm. It localises to the mitochondrion intermembrane space. Component of the cytosolic iron-sulfur (Fe-S) protein assembly (CIA) machinery required for the maturation of extramitochondrial Fe-S proteins. Part of an electron transfer chain functioning in an early step of cytosolic Fe-S biogenesis, facilitating the de novo assembly of a [4Fe-4S] cluster on the scaffold complex CFD1-NBP35. Electrons are transferred to DRE2 from NADPH via the FAD- and FMN-containing protein TAH18. TAH18-DRE2 are also required for the assembly of the diferric tyrosyl radical cofactor of ribonucleotide reductase (RNR), probably by providing electrons for reduction during radical cofactor maturation in the catalytic small subunit RNR2. This chain is Fe-S cluster assembly protein DRE2, found in Kluyveromyces lactis (strain ATCC 8585 / CBS 2359 / DSM 70799 / NBRC 1267 / NRRL Y-1140 / WM37) (Yeast).